A 335-amino-acid chain; its full sequence is DNA-directed RNA polymerase subunit alpha (335 aa).

Residues 1 to 233 form an alpha N-terminal domain (alpha-NTD) region; it reads MQRNWRELIK…DQLTIFINFE (233 aa). The alpha C-terminal domain (alpha-CTD) stretch occupies residues 249–335; that stretch reads FNDHLFRSVD…DIENRRKEQE (87 aa).

This sequence belongs to the RNA polymerase alpha chain family. In terms of assembly, homodimer. The RNAP catalytic core consists of 2 alpha, 1 beta, 1 beta' and 1 omega subunit. When a sigma factor is associated with the core the holoenzyme is formed, which can initiate transcription.

The catalysed reaction is RNA(n) + a ribonucleoside 5'-triphosphate = RNA(n+1) + diphosphate. Functionally, DNA-dependent RNA polymerase catalyzes the transcription of DNA into RNA using the four ribonucleoside triphosphates as substrates. In Syntrophobacter fumaroxidans (strain DSM 10017 / MPOB), this protein is DNA-directed RNA polymerase subunit alpha.